A 345-amino-acid chain; its full sequence is S-adenosylmethionine:tRNA ribosyltransferase-isomerase (345 aa).

Belongs to the QueA family. In terms of assembly, monomer.

The protein localises to the cytoplasm. The enzyme catalyses 7-aminomethyl-7-carbaguanosine(34) in tRNA + S-adenosyl-L-methionine = epoxyqueuosine(34) in tRNA + adenine + L-methionine + 2 H(+). It participates in tRNA modification; tRNA-queuosine biosynthesis. Its function is as follows. Transfers and isomerizes the ribose moiety from AdoMet to the 7-aminomethyl group of 7-deazaguanine (preQ1-tRNA) to give epoxyqueuosine (oQ-tRNA). In Shewanella baltica (strain OS185), this protein is S-adenosylmethionine:tRNA ribosyltransferase-isomerase.